Here is a 426-residue protein sequence, read N- to C-terminus: Phosphomethylpyrimidine synthase (426 aa).

Residues Asn65, Met94, Tyr123, His162, 184-186 (SRG), 225-228 (DGMR), and Glu264 each bind substrate. Residue His268 coordinates Zn(2+). Position 291 (Tyr291) interacts with substrate. His332 serves as a coordination point for Zn(2+). Residues Cys408, Cys411, and Cys415 each contribute to the [4Fe-4S] cluster site.

The protein belongs to the ThiC family. It depends on [4Fe-4S] cluster as a cofactor.

The enzyme catalyses 5-amino-1-(5-phospho-beta-D-ribosyl)imidazole + S-adenosyl-L-methionine = 4-amino-2-methyl-5-(phosphooxymethyl)pyrimidine + CO + 5'-deoxyadenosine + formate + L-methionine + 3 H(+). It participates in cofactor biosynthesis; thiamine diphosphate biosynthesis. Its function is as follows. Catalyzes the synthesis of the hydroxymethylpyrimidine phosphate (HMP-P) moiety of thiamine from aminoimidazole ribotide (AIR) in a radical S-adenosyl-L-methionine (SAM)-dependent reaction. This chain is Phosphomethylpyrimidine synthase, found in Methanococcus maripaludis (strain C7 / ATCC BAA-1331).